A 1482-amino-acid polypeptide reads, in one-letter code: Chromosome partition protein MukB (1482 aa).

34-41 serves as a coordination point for ATP; sequence GGNGAGKS. Coiled-coil stretches lie at residues 337 to 418, 444 to 472, 509 to 601, 781 to 805, 835 to 1116, and 1210 to 1265; these read LNLV…QYQQ, LDTYQAKEQEATERLLSLEQKMSVAQTAH, RHLA…TSHA, AARESRIESLHAEREALSERYATLS, EAEI…AKAG, and EAIE…LQSV. A flexible hinge region spans residues 666 to 783; sequence PGGAEDARLN…SVPLFGRAAR (118 aa). Positions 1049-1077 are disordered; the sequence is ADAGAEERARQRRDELHTRLSNNRSRRNQ. The segment covering 1051 to 1066 has biased composition (basic and acidic residues); that stretch reads AGAEERARQRRDELHT.

Belongs to the SMC family. MukB subfamily. As to quaternary structure, homodimerization via its hinge domain. Binds to DNA via its C-terminal region. Interacts, and probably forms a ternary complex, with MukE and MukF via its C-terminal region. The complex formation is stimulated by calcium or magnesium. Interacts with tubulin-related protein FtsZ.

The protein localises to the cytoplasm. It is found in the nucleoid. Its function is as follows. Plays a central role in chromosome condensation, segregation and cell cycle progression. Functions as a homodimer, which is essential for chromosome partition. Involved in negative DNA supercoiling in vivo, and by this means organize and compact chromosomes. May achieve or facilitate chromosome segregation by condensation DNA from both sides of a centrally located replisome during cell division. This is Chromosome partition protein MukB from Cronobacter sakazakii (strain ATCC BAA-894) (Enterobacter sakazakii).